The chain runs to 81 residues: ATP synthase subunit c (81 aa).

Helical transmembrane passes span 7 to 27 and 53 to 73; these read FVAL…CIGI and FLLA…AMMF.

The protein belongs to the ATPase C chain family. F-type ATPases have 2 components, F(1) - the catalytic core - and F(0) - the membrane proton channel. F(1) has five subunits: alpha(3), beta(3), gamma(1), delta(1), epsilon(1). F(0) has three main subunits: a(1), b(2) and c(10-14). The alpha and beta chains form an alternating ring which encloses part of the gamma chain. F(1) is attached to F(0) by a central stalk formed by the gamma and epsilon chains, while a peripheral stalk is formed by the delta and b chains.

The protein localises to the cell inner membrane. In terms of biological role, f(1)F(0) ATP synthase produces ATP from ADP in the presence of a proton or sodium gradient. F-type ATPases consist of two structural domains, F(1) containing the extramembraneous catalytic core and F(0) containing the membrane proton channel, linked together by a central stalk and a peripheral stalk. During catalysis, ATP synthesis in the catalytic domain of F(1) is coupled via a rotary mechanism of the central stalk subunits to proton translocation. Its function is as follows. Key component of the F(0) channel; it plays a direct role in translocation across the membrane. A homomeric c-ring of between 10-14 subunits forms the central stalk rotor element with the F(1) delta and epsilon subunits. This chain is ATP synthase subunit c, found in Azoarcus sp. (strain BH72).